We begin with the raw amino-acid sequence, 156 residues long: Ribosome-binding factor A (156 aa).

Positions 129 to 156 (AGEAQPYRVEEEPGDSEDETPPSSQDQR) are disordered.

The protein belongs to the RbfA family. As to quaternary structure, monomer. Binds 30S ribosomal subunits, but not 50S ribosomal subunits or 70S ribosomes.

The protein localises to the cytoplasm. In terms of biological role, one of several proteins that assist in the late maturation steps of the functional core of the 30S ribosomal subunit. Associates with free 30S ribosomal subunits (but not with 30S subunits that are part of 70S ribosomes or polysomes). Required for efficient processing of 16S rRNA. May interact with the 5'-terminal helix region of 16S rRNA. This Salinispora arenicola (strain CNS-205) protein is Ribosome-binding factor A.